A 329-amino-acid chain; its full sequence is 4-hydroxythreonine-4-phosphate dehydrogenase (329 aa).

The substrate site is built by histidine 136 and threonine 137. The a divalent metal cation site is built by histidine 166, histidine 211, and histidine 266. Lysine 274, asparagine 283, and arginine 292 together coordinate substrate.

Belongs to the PdxA family. In terms of assembly, homodimer. Zn(2+) serves as cofactor. It depends on Mg(2+) as a cofactor. The cofactor is Co(2+).

The protein resides in the cytoplasm. The enzyme catalyses 4-(phosphooxy)-L-threonine + NAD(+) = 3-amino-2-oxopropyl phosphate + CO2 + NADH. It functions in the pathway cofactor biosynthesis; pyridoxine 5'-phosphate biosynthesis; pyridoxine 5'-phosphate from D-erythrose 4-phosphate: step 4/5. Its function is as follows. Catalyzes the NAD(P)-dependent oxidation of 4-(phosphooxy)-L-threonine (HTP) into 2-amino-3-oxo-4-(phosphooxy)butyric acid which spontaneously decarboxylates to form 3-amino-2-oxopropyl phosphate (AHAP). This is 4-hydroxythreonine-4-phosphate dehydrogenase from Escherichia coli (strain 55989 / EAEC).